Consider the following 391-residue polypeptide: DNA repair protein NreA (391 aa).

The segment at Cys-6 to Cys-20 adopts a C4-type zinc-finger fold. The short motif at Gln-382 to Phe-389 is the PIP motif element.

It belongs to the Nre family. As to quaternary structure, interacts with the DNA polymerase sliding clamp (PCNA) via the PIP (PCNA-interacting peptide) motif.

Its function is as follows. Involved in DNA damage repair. This Archaeoglobus fulgidus (strain ATCC 49558 / DSM 4304 / JCM 9628 / NBRC 100126 / VC-16) protein is DNA repair protein NreA.